The chain runs to 513 residues: ATP synthase subunit alpha (513 aa).

ATP is bound at residue 169–176 (GDRQTGKT).

This sequence belongs to the ATPase alpha/beta chains family. In terms of assembly, F-type ATPases have 2 components, CF(1) - the catalytic core - and CF(0) - the membrane proton channel. CF(1) has five subunits: alpha(3), beta(3), gamma(1), delta(1), epsilon(1). CF(0) has three main subunits: a(1), b(2) and c(9-12). The alpha and beta chains form an alternating ring which encloses part of the gamma chain. CF(1) is attached to CF(0) by a central stalk formed by the gamma and epsilon chains, while a peripheral stalk is formed by the delta and b chains.

The protein resides in the cell inner membrane. The enzyme catalyses ATP + H2O + 4 H(+)(in) = ADP + phosphate + 5 H(+)(out). In terms of biological role, produces ATP from ADP in the presence of a proton gradient across the membrane. The alpha chain is a regulatory subunit. This is ATP synthase subunit alpha from Shewanella loihica (strain ATCC BAA-1088 / PV-4).